Consider the following 334-residue polypeptide: Replication factor C subunit 4 (334 aa).

55 to 62 lines the ATP pocket; that stretch reads GPPGTGKT.

This sequence belongs to the activator 1 small subunits family. Heteropentamer of various rfc subunits that forms a complex (RFC) with PCNA in the presence of ATP.

It is found in the nucleus. Its function is as follows. The elongation of primed DNA templates by DNA polymerase delta and epsilon requires the action of the accessory proteins PCNA and activator 1. This subunit may be involved in the elongation of the multiprimed DNA template. The polypeptide is Replication factor C subunit 4 (rfc-4) (Caenorhabditis elegans).